Here is a 777-residue protein sequence, read N- to C-terminus: Degenerin unc-8 (777 aa).

Topologically, residues 1 to 128 (MSPLLTWNLI…VATSSFFGRY (128 aa)) are cytoplasmic. A helical transmembrane segment spans residues 129–149 (VWAALFMCMLMAFLLQTYWTM). Over 150-689 (SEYLQYRTII…KETAGYTLVN (540 aa)) the chain is Extracellular. N-linked (GlcNAc...) asparagine glycosylation is found at Asn-274, Asn-319, Asn-357, Asn-411, Asn-453, Asn-533, and Asn-597. The chain crosses the membrane as a helical span at residues 690-710 (LFSDFGGNIGLWIGFSVITFA). At 711-777 (EFAELFCEIC…NESTKELMSK (67 aa)) the chain is on the cytoplasmic side. Residues 752 to 777 (QRSPKKSQPGEDEVSTNESTKELMSK) are disordered.

This sequence belongs to the amiloride-sensitive sodium channel (TC 1.A.6) family.

It localises to the membrane. In terms of biological role, sodium permeable non-voltage-sensitive ion channel. Involved in the activity-dependent removal of selected presynaptic proteins, such as synaptobrevin snb-1, and Ras-related rab-3, in the remodeling of GABAergic motor neurons. The sequence is that of Degenerin unc-8 from Caenorhabditis elegans.